The chain runs to 117 residues: MRDWRWMLLVLALLLGWLQYRFWFGPGNSGEVMMLEAQVTNQERDNEGLQQRNDALAAEVKDLKEGQSAIEERARSELGMIKPGEKFYRVVEDAPVHPVQPAAGVSAQVGEHPADVP.

Residues 1 to 6 (MRDWRW) lie on the Cytoplasmic side of the membrane. Residues 7-24 (MLLVLALLLGWLQYRFWF) form a helical membrane-spanning segment. At 25 to 117 (GPGNSGEVMM…QVGEHPADVP (93 aa)) the chain is on the periplasmic side. The stretch at 29 to 69 (SGEVMMLEAQVTNQERDNEGLQQRNDALAAEVKDLKEGQSA) forms a coiled coil.

Belongs to the FtsB family. Part of a complex composed of FtsB, FtsL and FtsQ.

The protein resides in the cell inner membrane. Functionally, essential cell division protein. May link together the upstream cell division proteins, which are predominantly cytoplasmic, with the downstream cell division proteins, which are predominantly periplasmic. This chain is Cell division protein FtsB, found in Stenotrophomonas maltophilia (strain R551-3).